The chain runs to 456 residues: Ribulose bisphosphate carboxylase large chain (456 aa).

Lys-7 is modified (N6,N6,N6-trimethyllysine). Positions 116 and 166 each coordinate substrate. Lys-168 acts as the Proton acceptor in catalysis. Lys-170 is a substrate binding site. Mg(2+)-binding residues include Lys-194, Asp-196, and Glu-197. The residue at position 194 (Lys-194) is an N6-carboxylysine. Catalysis depends on His-287, which acts as the Proton acceptor. 3 residues coordinate substrate: Arg-288, His-320, and Ser-372.

Belongs to the RuBisCO large chain family. Type I subfamily. As to quaternary structure, heterohexadecamer of 8 large chains and 8 small chains; disulfide-linked. The disulfide link is formed within the large subunit homodimers. Requires Mg(2+) as cofactor. The disulfide bond which can form in the large chain dimeric partners within the hexadecamer appears to be associated with oxidative stress and protein turnover.

It localises to the plastid. Its subcellular location is the chloroplast. It catalyses the reaction 2 (2R)-3-phosphoglycerate + 2 H(+) = D-ribulose 1,5-bisphosphate + CO2 + H2O. The catalysed reaction is D-ribulose 1,5-bisphosphate + O2 = 2-phosphoglycolate + (2R)-3-phosphoglycerate + 2 H(+). In terms of biological role, ruBisCO catalyzes two reactions: the carboxylation of D-ribulose 1,5-bisphosphate, the primary event in carbon dioxide fixation, as well as the oxidative fragmentation of the pentose substrate in the photorespiration process. Both reactions occur simultaneously and in competition at the same active site. In Barnardia japonica (Chinese squill), this protein is Ribulose bisphosphate carboxylase large chain.